Consider the following 141-residue polypeptide: HTH-type transcriptional repressor NsrR (141 aa).

In terms of domain architecture, HTH rrf2-type spans 2–129 (QLTSFTDYGL…DNYTLADLVE (128 aa)). Positions 28 to 51 (ISEVTDVYGVSRNHMVKIINQLSR) form a DNA-binding region, H-T-H motif. Cys91, Cys96, and Cys102 together coordinate [2Fe-2S] cluster.

Requires [2Fe-2S] cluster as cofactor.

Functionally, nitric oxide-sensitive repressor of genes involved in protecting the cell against nitrosative stress. May require iron for activity. This Escherichia coli O127:H6 (strain E2348/69 / EPEC) protein is HTH-type transcriptional repressor NsrR.